The chain runs to 353 residues: DNA replication and repair protein RecF (353 aa).

An ATP-binding site is contributed by 30–37 (GANGQGKT).

This sequence belongs to the RecF family.

Its subcellular location is the cytoplasm. In terms of biological role, the RecF protein is involved in DNA metabolism; it is required for DNA replication and normal SOS inducibility. RecF binds preferentially to single-stranded, linear DNA. It also seems to bind ATP. The polypeptide is DNA replication and repair protein RecF (Carboxydothermus hydrogenoformans (strain ATCC BAA-161 / DSM 6008 / Z-2901)).